The sequence spans 71 residues: DNA-directed RNA polymerase subunit omega (71 aa).

The protein belongs to the RNA polymerase subunit omega family. The RNAP catalytic core consists of 2 alpha, 1 beta, 1 beta' and 1 omega subunit. When a sigma factor is associated with the core the holoenzyme is formed, which can initiate transcription.

It catalyses the reaction RNA(n) + a ribonucleoside 5'-triphosphate = RNA(n+1) + diphosphate. Promotes RNA polymerase assembly. Latches the N- and C-terminal regions of the beta' subunit thereby facilitating its interaction with the beta and alpha subunits. This is DNA-directed RNA polymerase subunit omega from Campylobacter curvus (strain 525.92).